Reading from the N-terminus, the 123-residue chain is Crossover junction endodeoxyribonuclease Hjc (123 aa).

Mg(2+) is bound at residue E9. S29 is an active-site residue. The Mg(2+) site is built by D33 and E46.

This sequence belongs to the Holliday junction resolvase Hjc family. Homodimer. Probably interacts with PCNA and RadB. Requires Mg(2+) as cofactor. Mn(2+) is required as a cofactor.

The catalysed reaction is Endonucleolytic cleavage at a junction such as a reciprocal single-stranded crossover between two homologous DNA duplexes (Holliday junction).. Its activity is regulated as follows. Cleavage inhibited by RadB in the absence (but not presence) of ATP. A structure-specific endonuclease that resolves Holliday junction (HJ) intermediates during genetic recombination. Cleaves 4-way DNA junctions introducing paired nicks in opposing strands, leaving a 5'-terminal phosphate and a 3'-terminal hydroxyl group that are subsequently ligated to produce recombinant products. Cleaves both mobile and immobile junctions. Binds 4-way junction DNA, a synthetic Hj, binding is not competed by dsDNA. The chain is Crossover junction endodeoxyribonuclease Hjc from Pyrococcus furiosus (strain ATCC 43587 / DSM 3638 / JCM 8422 / Vc1).